Here is a 1391-residue protein sequence, read N- to C-terminus: DNA-directed RNA polymerase subunit beta' (1391 aa).

Zn(2+)-binding residues include Cys72, Cys74, Cys87, and Cys90. Mg(2+) is bound by residues Asp462, Asp464, and Asp466. Cys816, Cys890, Cys897, and Cys900 together coordinate Zn(2+).

This sequence belongs to the RNA polymerase beta' chain family. The RNAP catalytic core consists of 2 alpha, 1 beta, 1 beta' and 1 omega subunit. When a sigma factor is associated with the core the holoenzyme is formed, which can initiate transcription. Mg(2+) is required as a cofactor. The cofactor is Zn(2+).

The catalysed reaction is RNA(n) + a ribonucleoside 5'-triphosphate = RNA(n+1) + diphosphate. DNA-dependent RNA polymerase catalyzes the transcription of DNA into RNA using the four ribonucleoside triphosphates as substrates. The chain is DNA-directed RNA polymerase subunit beta' from Neisseria meningitidis serogroup C / serotype 2a (strain ATCC 700532 / DSM 15464 / FAM18).